We begin with the raw amino-acid sequence, 156 residues long: MSRRRVIGQAEILREPKFGNLDVAKFMNVVMLSGKKSIAESIVYGAFEAIQNKTGKDPIEIFSQALSNVKPMVEVKSRRVGGANYQVPVEVRPQRRAALAMRWIREAAKKRGEKSMAQRLANELVEASEGRGAAMKRRDEVHRMAEAHKAFSHFRF.

Belongs to the universal ribosomal protein uS7 family. As to quaternary structure, part of the 30S ribosomal subunit. Contacts proteins S9 and S11.

One of the primary rRNA binding proteins, it binds directly to 16S rRNA where it nucleates assembly of the head domain of the 30S subunit. Is located at the subunit interface close to the decoding center, probably blocks exit of the E-site tRNA. The protein is Small ribosomal subunit protein uS7 of Thiomonas delicata (Thiomonas cuprina).